The chain runs to 441 residues: Proline--tRNA ligase (441 aa).

It belongs to the class-II aminoacyl-tRNA synthetase family. ProS type 2 subfamily. As to quaternary structure, homodimer.

Its subcellular location is the cytoplasm. It catalyses the reaction tRNA(Pro) + L-proline + ATP = L-prolyl-tRNA(Pro) + AMP + diphosphate. Functionally, catalyzes the attachment of proline to tRNA(Pro) in a two-step reaction: proline is first activated by ATP to form Pro-AMP and then transferred to the acceptor end of tRNA(Pro). The polypeptide is Proline--tRNA ligase (Methylobacterium radiotolerans (strain ATCC 27329 / DSM 1819 / JCM 2831 / NBRC 15690 / NCIMB 10815 / 0-1)).